We begin with the raw amino-acid sequence, 163 residues long: uncharacterized protein (163 aa).

This is an uncharacterized protein from Rickettsia prowazekii (strain Madrid E).